The following is a 291-amino-acid chain: 4-diphosphocytidyl-2-C-methyl-D-erythritol kinase (291 aa).

The active site involves Lys-10. 94 to 104 provides a ligand contact to ATP; it reads PVSAGLAGGSS. Asp-136 is a catalytic residue.

This sequence belongs to the GHMP kinase family. IspE subfamily.

The enzyme catalyses 4-CDP-2-C-methyl-D-erythritol + ATP = 4-CDP-2-C-methyl-D-erythritol 2-phosphate + ADP + H(+). The protein operates within isoprenoid biosynthesis; isopentenyl diphosphate biosynthesis via DXP pathway; isopentenyl diphosphate from 1-deoxy-D-xylulose 5-phosphate: step 3/6. Its function is as follows. Catalyzes the phosphorylation of the position 2 hydroxy group of 4-diphosphocytidyl-2C-methyl-D-erythritol. The polypeptide is 4-diphosphocytidyl-2-C-methyl-D-erythritol kinase (Listeria welshimeri serovar 6b (strain ATCC 35897 / DSM 20650 / CCUG 15529 / CIP 8149 / NCTC 11857 / SLCC 5334 / V8)).